A 339-amino-acid polypeptide reads, in one-letter code: Anthranilate phosphoribosyltransferase (339 aa).

5-phospho-alpha-D-ribose 1-diphosphate is bound by residues G79, 82–83 (GD), S87, 89–92 (NIST), 107–115 (KHGNRSISS), and S119. Residue G79 coordinates anthranilate. S91 serves as a coordination point for Mg(2+). N110 is a binding site for anthranilate. Residue R165 coordinates anthranilate. The Mg(2+) site is built by D224 and E225.

It belongs to the anthranilate phosphoribosyltransferase family. As to quaternary structure, homodimer. Requires Mg(2+) as cofactor.

The catalysed reaction is N-(5-phospho-beta-D-ribosyl)anthranilate + diphosphate = 5-phospho-alpha-D-ribose 1-diphosphate + anthranilate. The protein operates within amino-acid biosynthesis; L-tryptophan biosynthesis; L-tryptophan from chorismate: step 2/5. Functionally, catalyzes the transfer of the phosphoribosyl group of 5-phosphorylribose-1-pyrophosphate (PRPP) to anthranilate to yield N-(5'-phosphoribosyl)-anthranilate (PRA). The chain is Anthranilate phosphoribosyltransferase from Listeria welshimeri serovar 6b (strain ATCC 35897 / DSM 20650 / CCUG 15529 / CIP 8149 / NCTC 11857 / SLCC 5334 / V8).